Here is an 823-residue protein sequence, read N- to C-terminus: ATP-dependent DNA helicase At3g02060, chloroplastic (823 aa).

Residues 1–53 (MMSLLPNPDPITVPLVLKLCSFPPPRRLFSLRLRRFTRKSSSLLPLVAVSSLS) constitute a chloroplast transit peptide. One can recognise a Helicase ATP-binding domain in the interval 285-447 (LTERETPMDR…LTGFRDASLI (163 aa)). 298–305 (GDVGFGKT) serves as a coordination point for ATP. Positions 400–403 (DEEQ) match the DEEQ box motif. A Helicase C-terminal domain is found at 465 to 622 (RKEKVIEAIK…GFQLAEKDMG (158 aa)).

This sequence belongs to the helicase family.

It is found in the plastid. The protein localises to the chloroplast. The enzyme catalyses ATP + H2O = ADP + phosphate + H(+). This Arabidopsis thaliana (Mouse-ear cress) protein is ATP-dependent DNA helicase At3g02060, chloroplastic.